We begin with the raw amino-acid sequence, 428 residues long: Glutamate-1-semialdehyde 2,1-aminomutase 1 (428 aa).

Lysine 268 is modified (N6-(pyridoxal phosphate)lysine).

This sequence belongs to the class-III pyridoxal-phosphate-dependent aminotransferase family. HemL subfamily. Homodimer. It depends on pyridoxal 5'-phosphate as a cofactor.

The protein localises to the cytoplasm. It catalyses the reaction (S)-4-amino-5-oxopentanoate = 5-aminolevulinate. The protein operates within porphyrin-containing compound metabolism; protoporphyrin-IX biosynthesis; 5-aminolevulinate from L-glutamyl-tRNA(Glu): step 2/2. The polypeptide is Glutamate-1-semialdehyde 2,1-aminomutase 1 (Bacillus cereus (strain G9842)).